The chain runs to 248 residues: Transmembrane protein 223 (248 aa).

The next 3 membrane-spanning stretches (helical) occupy residues 46–68, 84–104, and 140–160; these read IFRP…AAVA, LLAI…HFAF, and YGFT…ALLF.

It belongs to the TMEM223 family.

The protein resides in the mitochondrion inner membrane. Functionally, mitochondrial ribosome-associated protein involved in the first steps of cytochrome c oxidase complex (complex IV) biogenesis. Stimulates the translation of MT-CO1 mRNA and is a constituent of early MT-CO1 assembly intermediates. The sequence is that of Transmembrane protein 223 from Danio rerio (Zebrafish).